The following is a 341-amino-acid chain: 1-aminocyclopropane-1-carboxylate deaminase (341 aa).

S1 is modified (N-acetylserine). N6-(pyridoxal phosphate)lysine is present on K51. S78 acts as the Nucleophile in catalysis.

Belongs to the ACC deaminase/D-cysteine desulfhydrase family. In terms of assembly, homodimer. It depends on pyridoxal 5'-phosphate as a cofactor.

The enzyme catalyses 1-aminocyclopropane-1-carboxylate + H2O = 2-oxobutanoate + NH4(+). In terms of biological role, catalyzes a cyclopropane ring-opening reaction, the irreversible conversion of 1-aminocyclopropane-1-carboxylate (ACC) to ammonia and alpha-ketobutyrate. In Cyberlindnera saturnus (Yeast), this protein is 1-aminocyclopropane-1-carboxylate deaminase.